The following is a 560-amino-acid chain: DNA ligase B (560 aa).

Lys-128 serves as the catalytic N6-AMP-lysine intermediate.

It belongs to the NAD-dependent DNA ligase family. LigB subfamily.

It catalyses the reaction NAD(+) + (deoxyribonucleotide)n-3'-hydroxyl + 5'-phospho-(deoxyribonucleotide)m = (deoxyribonucleotide)n+m + AMP + beta-nicotinamide D-nucleotide.. Catalyzes the formation of phosphodiester linkages between 5'-phosphoryl and 3'-hydroxyl groups in double-stranded DNA using NAD as a coenzyme and as the energy source for the reaction. The polypeptide is DNA ligase B (Azotobacter vinelandii (strain DJ / ATCC BAA-1303)).